Reading from the N-terminus, the 442-residue chain is Putative mannan endo-1,6-alpha-mannosidase C970.02 (442 aa).

An N-terminal signal peptide occupies residues 1–19; sequence MSLTIFISLATILFSFAEA. N-linked (GlcNAc...) asparagine glycans are attached at residues N25, N82, N107, N131, N201, N236, N261, N264, N277, and N361.

It belongs to the glycosyl hydrolase 76 family.

It carries out the reaction Random hydrolysis of (1-&gt;6)-alpha-D-mannosidic linkages in unbranched (1-&gt;6)-mannans.. The protein is Putative mannan endo-1,6-alpha-mannosidase C970.02 of Schizosaccharomyces pombe (strain 972 / ATCC 24843) (Fission yeast).